Here is a 192-residue protein sequence, read N- to C-terminus: 7-methyl-GTP pyrophosphatase (192 aa).

D69 serves as the catalytic Proton acceptor.

The protein belongs to the Maf family. YceF subfamily. Requires a divalent metal cation as cofactor.

The protein localises to the cytoplasm. The enzyme catalyses N(7)-methyl-GTP + H2O = N(7)-methyl-GMP + diphosphate + H(+). Nucleoside triphosphate pyrophosphatase that hydrolyzes 7-methyl-GTP (m(7)GTP). May have a dual role in cell division arrest and in preventing the incorporation of modified nucleotides into cellular nucleic acids. The chain is 7-methyl-GTP pyrophosphatase (maf-1) from Pseudomonas syringae pv. tomato (strain ATCC BAA-871 / DC3000).